A 47-amino-acid polypeptide reads, in one-letter code: Photosystem II reaction center protein K (47 aa).

The propeptide occupies 1–10 (MALINFDLLA). The helical transmembrane segment at 26–46 (LPLIPLFFFLLVFVWQAAVGF) threads the bilayer.

It belongs to the PsbK family. As to quaternary structure, PSII is composed of 1 copy each of membrane proteins PsbA, PsbB, PsbC, PsbD, PsbE, PsbF, PsbH, PsbI, PsbJ, PsbK, PsbL, PsbM, PsbT, PsbX, PsbY, Psb30/Ycf12, peripheral proteins PsbO, CyanoQ (PsbQ), PsbU, PsbV and a large number of cofactors. It forms dimeric complexes.

It localises to the cellular thylakoid membrane. In terms of biological role, one of the components of the core complex of photosystem II (PSII). PSII is a light-driven water:plastoquinone oxidoreductase that uses light energy to abstract electrons from H(2)O, generating O(2) and a proton gradient subsequently used for ATP formation. It consists of a core antenna complex that captures photons, and an electron transfer chain that converts photonic excitation into a charge separation. The sequence is that of Photosystem II reaction center protein K from Prochlorococcus marinus (strain NATL2A).